Consider the following 229-residue polypeptide: Dephospho-CoA kinase (229 aa).

Residues 3–203 (TVGLTGGIGS…ARRDAKATAK (201 aa)) enclose the DPCK domain. Residue 11-16 (GSGKSA) coordinates ATP. Positions 203 to 229 (KATAKAETVASGTDTAASGTDTAAPAG) are disordered.

This sequence belongs to the CoaE family.

It localises to the cytoplasm. It catalyses the reaction 3'-dephospho-CoA + ATP = ADP + CoA + H(+). It participates in cofactor biosynthesis; coenzyme A biosynthesis; CoA from (R)-pantothenate: step 5/5. In terms of biological role, catalyzes the phosphorylation of the 3'-hydroxyl group of dephosphocoenzyme A to form coenzyme A. This is Dephospho-CoA kinase from Frankia casuarinae (strain DSM 45818 / CECT 9043 / HFP020203 / CcI3).